A 387-amino-acid polypeptide reads, in one-letter code: Succinyl-diaminopimelate desuccinylase (387 aa).

H74 is a Zn(2+) binding site. D76 is a catalytic residue. A Zn(2+)-binding site is contributed by D107. E142 (proton acceptor) is an active-site residue. Zn(2+) contacts are provided by E143, E171, and H360.

This sequence belongs to the peptidase M20A family. DapE subfamily. As to quaternary structure, homodimer. Zn(2+) is required as a cofactor. It depends on Co(2+) as a cofactor.

It catalyses the reaction N-succinyl-(2S,6S)-2,6-diaminopimelate + H2O = (2S,6S)-2,6-diaminopimelate + succinate. It functions in the pathway amino-acid biosynthesis; L-lysine biosynthesis via DAP pathway; LL-2,6-diaminopimelate from (S)-tetrahydrodipicolinate (succinylase route): step 3/3. Functionally, catalyzes the hydrolysis of N-succinyl-L,L-diaminopimelic acid (SDAP), forming succinate and LL-2,6-diaminopimelate (DAP), an intermediate involved in the bacterial biosynthesis of lysine and meso-diaminopimelic acid, an essential component of bacterial cell walls. This chain is Succinyl-diaminopimelate desuccinylase, found in Rhodopseudomonas palustris (strain TIE-1).